The primary structure comprises 431 residues: Serine--tRNA ligase (431 aa).

Residues 41-66 (QSRTQELQAERNARSKSIGEAARRGE) are disordered. An L-serine-binding site is contributed by 240 to 242 (TSE). Residue 271–273 (RSE) coordinates ATP. Glutamate 294 lines the L-serine pocket. Position 358–361 (358–361 (EISS)) interacts with ATP. Residue serine 392 coordinates L-serine.

This sequence belongs to the class-II aminoacyl-tRNA synthetase family. Type-1 seryl-tRNA synthetase subfamily. In terms of assembly, homodimer. The tRNA molecule binds across the dimer.

The protein localises to the cytoplasm. It catalyses the reaction tRNA(Ser) + L-serine + ATP = L-seryl-tRNA(Ser) + AMP + diphosphate + H(+). The catalysed reaction is tRNA(Sec) + L-serine + ATP = L-seryl-tRNA(Sec) + AMP + diphosphate + H(+). It functions in the pathway aminoacyl-tRNA biosynthesis; selenocysteinyl-tRNA(Sec) biosynthesis; L-seryl-tRNA(Sec) from L-serine and tRNA(Sec): step 1/1. Functionally, catalyzes the attachment of serine to tRNA(Ser). Is also able to aminoacylate tRNA(Sec) with serine, to form the misacylated tRNA L-seryl-tRNA(Sec), which will be further converted into selenocysteinyl-tRNA(Sec). This is Serine--tRNA ligase from Aeromonas salmonicida (strain A449).